We begin with the raw amino-acid sequence, 448 residues long: Exodeoxyribonuclease 7 large subunit (448 aa).

Belongs to the XseA family. As to quaternary structure, heterooligomer composed of large and small subunits.

It is found in the cytoplasm. The catalysed reaction is Exonucleolytic cleavage in either 5'- to 3'- or 3'- to 5'-direction to yield nucleoside 5'-phosphates.. In terms of biological role, bidirectionally degrades single-stranded DNA into large acid-insoluble oligonucleotides, which are then degraded further into small acid-soluble oligonucleotides. The polypeptide is Exodeoxyribonuclease 7 large subunit (Shewanella baltica (strain OS155 / ATCC BAA-1091)).